Here is a 399-residue protein sequence, read N- to C-terminus: S-adenosylmethionine synthase (399 aa).

H16 lines the ATP pocket. D18 provides a ligand contact to Mg(2+). E44 contributes to the K(+) binding site. L-methionine contacts are provided by E57 and Q100. Positions 100-110 (QSSDIAQGVNE) are flexible loop. ATP-binding positions include 177-179 (DAK), 244-245 (RF), D253, 259-260 (RK), A276, and K280. D253 is a binding site for L-methionine. An L-methionine-binding site is contributed by K284.

The protein belongs to the AdoMet synthase family. Homotetramer; dimer of dimers. Requires Mg(2+) as cofactor. K(+) is required as a cofactor.

The protein localises to the cytoplasm. It carries out the reaction L-methionine + ATP + H2O = S-adenosyl-L-methionine + phosphate + diphosphate. Its pathway is amino-acid biosynthesis; S-adenosyl-L-methionine biosynthesis; S-adenosyl-L-methionine from L-methionine: step 1/1. In terms of biological role, catalyzes the formation of S-adenosylmethionine (AdoMet) from methionine and ATP. The overall synthetic reaction is composed of two sequential steps, AdoMet formation and the subsequent tripolyphosphate hydrolysis which occurs prior to release of AdoMet from the enzyme. This chain is S-adenosylmethionine synthase, found in Lactococcus lactis subsp. lactis (strain IL1403) (Streptococcus lactis).